The chain runs to 327 residues: DNA repair and recombination protein RadA (327 aa).

ATP is bound at residue 113–120; it reads GEFGSGKS.

The protein belongs to the eukaryotic RecA-like protein family.

In terms of biological role, involved in DNA repair and in homologous recombination. Binds and assemble on single-stranded DNA to form a nucleoprotein filament. Hydrolyzes ATP in a ssDNA-dependent manner and promotes DNA strand exchange between homologous DNA molecules. The polypeptide is DNA repair and recombination protein RadA (Ignicoccus hospitalis (strain KIN4/I / DSM 18386 / JCM 14125)).